Here is an 865-residue protein sequence, read N- to C-terminus: Leucine--tRNA ligase (865 aa).

The short motif at 44-54 (PYPSGRIHVGH) is the 'HIGH' region element. The 'KMSKS' region motif lies at 625-629 (KMSKS). Lysine 628 is an ATP binding site.

It belongs to the class-I aminoacyl-tRNA synthetase family.

The protein localises to the cytoplasm. It carries out the reaction tRNA(Leu) + L-leucine + ATP = L-leucyl-tRNA(Leu) + AMP + diphosphate. This is Leucine--tRNA ligase from Maricaulis maris (strain MCS10) (Caulobacter maris).